The following is a 665-amino-acid chain: Alpha-1,4-glucan:maltose-1-phosphate maltosyltransferase (665 aa).

Residues K255, Q315, and D350 each contribute to the alpha-maltose 1-phosphate site. D386 acts as the Nucleophile in catalysis. N387 is a binding site for alpha-maltose 1-phosphate. E415 serves as the catalytic Proton donor. An alpha-maltose 1-phosphate-binding site is contributed by 526–527; the sequence is KY.

This sequence belongs to the glycosyl hydrolase 13 family. GlgE subfamily. As to quaternary structure, homodimer.

The catalysed reaction is alpha-maltose 1-phosphate + [(1-&gt;4)-alpha-D-glucosyl](n) = [(1-&gt;4)-alpha-D-glucosyl](n+2) + phosphate. In terms of biological role, maltosyltransferase that uses maltose 1-phosphate (M1P) as the sugar donor to elongate linear or branched alpha-(1-&gt;4)-glucans. Is involved in a branched alpha-glucan biosynthetic pathway from trehalose, together with TreS, Mak and GlgB. This Myxococcus xanthus (strain DK1622) protein is Alpha-1,4-glucan:maltose-1-phosphate maltosyltransferase.